Reading from the N-terminus, the 383-residue chain is ATP phosphoribosyltransferase regulatory subunit (383 aa).

It belongs to the class-II aminoacyl-tRNA synthetase family. HisZ subfamily. In terms of assembly, heteromultimer composed of HisG and HisZ subunits.

It is found in the cytoplasm. Its pathway is amino-acid biosynthesis; L-histidine biosynthesis; L-histidine from 5-phospho-alpha-D-ribose 1-diphosphate: step 1/9. Its function is as follows. Required for the first step of histidine biosynthesis. May allow the feedback regulation of ATP phosphoribosyltransferase activity by histidine. This is ATP phosphoribosyltransferase regulatory subunit from Paraburkholderia phymatum (strain DSM 17167 / CIP 108236 / LMG 21445 / STM815) (Burkholderia phymatum).